A 686-amino-acid polypeptide reads, in one-letter code: MVMDLKLIAAGLRHCGKVQAFKRGESIQAHVIKQGISQNVFIANNVISMYVDFRLLSDAHKVFDEMSERNIVTWTTMVSGYTSDGKPNKAIELYRRMLDSEEEAANEFMYSAVLKACGLVGDIQLGILVYERIGKENLRGDVVLMNSVVDMYVKNGRLIEANSSFKEILRPSSTSWNTLISGYCKAGLMDEAVTLFHRMPQPNVVSWNCLISGFVDKGSPRALEFLVRMQREGLVLDGFALPCGLKACSFGGLLTMGKQLHCCVVKSGLESSPFAISALIDMYSNCGSLIYAADVFHQEKLAVNSSVAVWNSMLSGFLINEENEAALWLLLQIYQSDLCFDSYTLSGALKICINYVNLRLGLQVHSLVVVSGYELDYIVGSILVDLHANVGNIQDAHKLFHRLPNKDIIAFSGLIRGCVKSGFNSLAFYLFRELIKLGLDADQFIVSNILKVCSSLASLGWGKQIHGLCIKKGYESEPVTATALVDMYVKCGEIDNGVVLFDGMLERDVVSWTGIIVGFGQNGRVEEAFRYFHKMINIGIEPNKVTFLGLLSACRHSGLLEEARSTLETMKSEYGLEPYLEHYYCVVDLLGQAGLFQEANELINKMPLEPDKTIWTSLLTACGTHKNAGLVTVIAEKLLKGFPDDPSVYTSLSNAYATLGMWDQLSKVREAAKKLGAKESGMSWII.

PPR repeat units follow at residues 4-38 (DLKL…GISQ), 39-69 (NVFI…MSER), 70-104 (NIVT…EEEA), 106-140 (NEFM…NLRG), 141-171 (DVVL…ILRP), 172-206 (SSTS…NVVS), 207-236 (WNCL…GLVL), 237-271 (DGFA…GLES), 272-302 (SPFA…EKLA), 306-340 (SVAV…DLCF), 341-375 (DSYT…GYEL), 376-406 (DYIV…LPNK), 407-441 (DIIA…GLDA), 442-476 (DQFI…GYES), 477-507 (EPVT…MLER), 508-542 (DVVS…GIEP), 543-573 (NKVT…MKSE), and 579-609 (YLEH…MPLE). Residues 614-686 (IWTSLLTACG…AKESGMSWII (73 aa)) form a type E motif; degenerate region.

This sequence belongs to the PPR family. PCMP-E subfamily.

The sequence is that of Pentatricopeptide repeat-containing protein At4g08210 (PCMP-E100) from Arabidopsis thaliana (Mouse-ear cress).